A 247-amino-acid chain; its full sequence is Carboxy-S-adenosyl-L-methionine synthase (247 aa).

S-adenosyl-L-methionine contacts are provided by residues tyrosine 39, 64–66, 89–90, 117–118, asparagine 132, and arginine 199; these read GCS, DN, and DI.

This sequence belongs to the class I-like SAM-binding methyltransferase superfamily. Cx-SAM synthase family. As to quaternary structure, homodimer.

It catalyses the reaction prephenate + S-adenosyl-L-methionine = carboxy-S-adenosyl-L-methionine + 3-phenylpyruvate + H2O. Its function is as follows. Catalyzes the conversion of S-adenosyl-L-methionine (SAM) to carboxy-S-adenosyl-L-methionine (Cx-SAM). In Klebsiella pneumoniae subsp. pneumoniae (strain ATCC 700721 / MGH 78578), this protein is Carboxy-S-adenosyl-L-methionine synthase.